The sequence spans 470 residues: Poly(A) polymerase catalytic subunit (470 aa).

Residues Asp-192 and Asp-194 contribute to the active site.

The protein belongs to the poxviridae poly(A) polymerase catalytic subunit family. Heterodimer of a large (catalytic) subunit and a small (regulatory) subunit.

It carries out the reaction RNA(n) + ATP = RNA(n)-3'-adenine ribonucleotide + diphosphate. Polymerase that creates the 3'-poly(A) tail of mRNA's. The protein is Poly(A) polymerase catalytic subunit (PAPL) of Homo sapiens (Human).